Here is a 359-residue protein sequence, read N- to C-terminus: uncharacterized protein (359 aa).

This is an uncharacterized protein from Dictyostelium discoideum (Social amoeba).